A 336-amino-acid chain; its full sequence is Alcohol dehydrogenase (336 aa).

Residues C37, H58, C89, C92, C95, C103, and C145 each contribute to the Zn(2+) site.

It belongs to the zinc-containing alcohol dehydrogenase family. Zn(2+) is required as a cofactor.

It catalyses the reaction a primary alcohol + NAD(+) = an aldehyde + NADH + H(+). The catalysed reaction is a secondary alcohol + NAD(+) = a ketone + NADH + H(+). This Staphylococcus aureus (strain Mu50 / ATCC 700699) protein is Alcohol dehydrogenase (adh).